The following is an 808-amino-acid chain: PH domain-containing protein DDB_G0275795 (808 aa).

Residues 57 to 121 (ENLEILKEIK…RNRQASQQEL (65 aa)) are a coiled coil. Residues 108–120 (ESTTRNRQASQQE) are compositionally biased toward polar residues. Disordered regions lie at residues 108 to 127 (ESTTRNRQASQQELPKPPIL), 228 to 325 (GANA…QDEE), 339 to 375 (EKLKQQDDQQQDDKQQQQQQSQEPPQQQQQQQEQLQS), 405 to 475 (QQQQ…NGSN), 523 to 542 (DQTKTDAEEKQNKSSNELKK), and 645 to 675 (KGGGSGIHTNSNNNNNSNNNNNNSNNNSNTD). The PH domain occupies 124–216 (PPILSGYLKK…WTEGLKEFKK (93 aa)). The segment covering 228–248 (GANANGNGNSSPNMSSSGSYS) has biased composition (low complexity). The segment covering 255 to 274 (ESSQQPLNSSTGAINTTPQR) has biased composition (polar residues). The segment covering 293–321 (SHSSSSTAPDSPTLSSSYVPPPSSSNLNP) has biased composition (low complexity). Residues 322-412 (QDEELKRREN…QQQQQQQQQQ (91 aa)) are a coiled coil. Positions 339–353 (EKLKQQDDQQQDDKQ) are enriched in basic and acidic residues. Composition is skewed to low complexity over residues 354–375 (QQQQQSQEPPQQQQQQQEQLQS) and 405–414 (QQQQQQQQPP). The segment covering 417 to 428 (SPQNSRHGSTNY) has biased composition (polar residues). The segment covering 429-449 (SQLQQQQQQPQQQPQQQSSPQ) has biased composition (low complexity). Positions 450 to 475 (VIISNNNSPRFESQQQQNNFHNNGSN) are enriched in polar residues. Residues 487-645 (DELNKKFLKE…DKYINELLEK (159 aa)) adopt a coiled-coil conformation. Basic and acidic residues predominate over residues 525–542 (TKTDAEEKQNKSSNELKK). Positions 654-673 (NSNNNNNSNNNNNNSNNNSN) are enriched in low complexity. The stretch at 678–734 (KESMVAHQTQNAFLLQEIQRLETQSQFKLDIKIQQIEELENQLEQQLYQFHRFREAI) forms a coiled coil.

The polypeptide is PH domain-containing protein DDB_G0275795 (Dictyostelium discoideum (Social amoeba)).